We begin with the raw amino-acid sequence, 511 residues long: Cytochrome P450 4A7 (511 aa).

Positions 1-4 are excised as a propeptide; it reads MSVS. Heme is bound by residues glutamate 322 and cysteine 458.

It belongs to the cytochrome P450 family. Heme is required as a cofactor. Liver, kidney, small intestine.

It localises to the endoplasmic reticulum membrane. It is found in the microsome membrane. The enzyme catalyses an omega-methyl-long-chain fatty acid + reduced [NADPH--hemoprotein reductase] + O2 = an omega-hydroxy-long-chain fatty acid + oxidized [NADPH--hemoprotein reductase] + H2O + H(+). Cytochromes P450 are a group of heme-thiolate monooxygenases. In liver microsomes, this enzyme is involved in an NADPH-dependent electron transport pathway. It oxidizes a variety of structurally unrelated compounds, including steroids, fatty acids, and xenobiotics. Functionally, the kidney P-450 system is rather specialized for the omega-hydroxylation of fatty acids. Both P450-KA1 and P450-KA2 catalyze the omega- and (omega-1)-hydroxylation of various fatty acids with no drug-metabolizing activity, and hydroxylate prostaglandin A1 and A2 solely at the omega-position. This Oryctolagus cuniculus (Rabbit) protein is Cytochrome P450 4A7 (CYP4A7).